A 282-amino-acid chain; its full sequence is Exo-glucosaminidase LytG (282 aa).

Residues 1–29 form the signal peptide; it reads MARKKLKKRKLLISLFFLVSIPLALFVLA. The region spanning 203–281 is the GW domain; sequence SLKSVDLNAS…DDSAVEIKEA (79 aa).

It belongs to the glycosyl hydrolase 73 family. The cofactor is Mg(2+).

It localises to the secreted. It is found in the cell wall. Its activity is regulated as follows. Inhibited by EDTA. In terms of biological role, is the major glucosaminidase responsible for peptidoglycan structural determination during vegetative growth. Catalyzes the hydrolysis of 1,4-beta-linkages between N-acetyl-D-glucosamine and N-acetylmuramic acid residues in peptidoglycan. Acts processively from the ends of the glycan strands. Also plays a role in motility, chemotaxis and cell division. The sequence is that of Exo-glucosaminidase LytG (lytG) from Bacillus subtilis (strain 168).